Here is a 499-residue protein sequence, read N- to C-terminus: Pentatricopeptide repeat-containing protein PPR5, chloroplastic (499 aa).

Residues 1-12 (MLACPSTSSPWP) are compositionally biased toward low complexity. Positions 1–28 (MLACPSTSSPWPQRQPPSPCPGGGGGAT) are disordered. A chloroplast-targeting transit peptide spans 1 to 45 (MLACPSTSSPWPQRQPPSPCPGGGGGATRHVALAARSKRRGAGPA). 9 PPR repeats span residues 123–157 (DNGIYSKLISVMGRKGQIRMAMWLFSQMRNSGCKP), 158–193 (DTSVYNSLIGAHLHSRDKTKALAKALGYFEKMKCIE), 198–232 (TIVTYNILLRAFAQAGDTKQVDMLFKDLDESVVSP), 233–267 (DVYTYNGVLDAYGKNGMIKEMESVLVRMKSTQCRP), 268–302 (DVITFNILIDSYGRKQTFDKMEQVFKSLLRSKERP), 303–337 (THPTFNSMITNYGRARLREKAESVVEKMEELGFKP), 338–372 (NYVTQECLIIMYAHCDCVSKARQVFDELVTSQTKV), 373–407 (HLSSLNSMLEAYCMNGLHTEADRLLDTALQQCVVP), and 408–442 (NGSTYKLLYKAYTKANDKLLVQKLLKRMNKQGIVP). A disordered region spans residues 458–499 (DRKPRTSPGINSASKPSTDSAGDSETATSDKPEVSVWHVAAT). The span at 465 to 484 (PGINSASKPSTDSAGDSETA) shows a compositional bias: polar residues.

This sequence belongs to the PPR family. P subfamily.

Its subcellular location is the plastid. It is found in the chloroplast. In terms of biological role, involved in the biogenesis of the plastid translation machinery by promoting the splicing of group II introns in chloroplasts. Stabilizes the chloroplast trnG pre-RNA by directly binding to a group II intron, where it protects an endonuclease-sensitive site and stimulates splicing. Binds specific sites within group II intron trnG pre-RNA. Binds with high affinity to the 5'-UTR of the chloroplastic petA mRNA. The chain is Pentatricopeptide repeat-containing protein PPR5, chloroplastic from Zea mays (Maize).